A 123-amino-acid chain; its full sequence is Ribonuclease P protein component 1 (123 aa).

The tract at residues 73–93 (PDNGVGTAFKPAGGETRQTTG) is disordered.

It belongs to the eukaryotic/archaeal RNase P protein component 1 family. Consists of a catalytic RNA component and at least 4-5 protein subunits.

It is found in the cytoplasm. It carries out the reaction Endonucleolytic cleavage of RNA, removing 5'-extranucleotides from tRNA precursor.. Its function is as follows. Part of ribonuclease P, a protein complex that generates mature tRNA molecules by cleaving their 5'-ends. In Halobacterium salinarum (strain ATCC 29341 / DSM 671 / R1), this protein is Ribonuclease P protein component 1.